The sequence spans 1188 residues: uncharacterized protein (1188 aa).

Disordered stretches follow at residues 126–468 (GDLR…SQME), 484–771 (EDRF…LYKP), 790–823 (ARGG…TDEL), and 847–1039 (QRAQ…FSRF). Composition is skewed to pro residues over residues 139 to 151 (IPPP…PGPP), 159 to 193 (GGSP…PPPV), and 208 to 240 (IPTP…PAPA). Ser260 carries the post-translational modification Phosphoserine. Residues 322 to 331 (EAPRKEEGAT) are compositionally biased toward basic and acidic residues. Pro residues predominate over residues 389-418 (TPPPAPPLPPPAPPLPPPAPPLPPAAPPLP). Residues 432 to 441 (KTPKSSSPAL) are compositionally biased toward low complexity. Composition is skewed to basic and acidic residues over residues 501 to 514 (KEGK…EKET) and 566 to 583 (IRNE…KEAK). The span at 618 to 633 (LPPQSTTLLPTTSLQP) shows a compositional bias: low complexity. The segment covering 640 to 652 (AIPPKATPEPAIP) has biased composition (pro residues). Thr666 is subject to Phosphothreonine. The segment covering 689-703 (PAIASTATTLPTTTS) has biased composition (low complexity). The segment covering 875 to 893 (AEASSDSIFHSQGTPNSFT) has biased composition (polar residues). Basic and acidic residues predominate over residues 920-931 (LGRDAEGTELSR). A compositionally biased stretch (pro residues) spans 986 to 1001 (IPPPPEFSNDPEPPAP). A compositionally biased stretch (polar residues) spans 1007-1019 (GRQSSPPRNNYSD). The span at 1026–1035 (AGPGAPPALG) shows a compositional bias: low complexity. Position 1044 is an asymmetric dimethylarginine (Arg1044). The tract at residues 1069-1160 (GEPHRGPGLP…SPYTTTRYGS (92 aa)) is disordered. Residues Arg1073 and Arg1084 each carry the omega-N-methylarginine modification. Asymmetric dimethylarginine is present on Arg1157.

This is an uncharacterized protein from Homo sapiens (Human).